A 504-amino-acid polypeptide reads, in one-letter code: Maturase K (504 aa).

It belongs to the intron maturase 2 family. MatK subfamily.

It is found in the plastid. Its subcellular location is the chloroplast. Usually encoded in the trnK tRNA gene intron. Probably assists in splicing its own and other chloroplast group II introns. The polypeptide is Maturase K (Quercus robur (English oak)).